A 253-amino-acid chain; its full sequence is Imidazole glycerol phosphate synthase subunit HisF (253 aa).

Active-site residues include D11 and D130.

It belongs to the HisA/HisF family. Heterodimer of HisH and HisF.

Its subcellular location is the cytoplasm. The enzyme catalyses 5-[(5-phospho-1-deoxy-D-ribulos-1-ylimino)methylamino]-1-(5-phospho-beta-D-ribosyl)imidazole-4-carboxamide + L-glutamine = D-erythro-1-(imidazol-4-yl)glycerol 3-phosphate + 5-amino-1-(5-phospho-beta-D-ribosyl)imidazole-4-carboxamide + L-glutamate + H(+). It participates in amino-acid biosynthesis; L-histidine biosynthesis; L-histidine from 5-phospho-alpha-D-ribose 1-diphosphate: step 5/9. Functionally, IGPS catalyzes the conversion of PRFAR and glutamine to IGP, AICAR and glutamate. The HisF subunit catalyzes the cyclization activity that produces IGP and AICAR from PRFAR using the ammonia provided by the HisH subunit. This chain is Imidazole glycerol phosphate synthase subunit HisF, found in Acidithiobacillus ferrooxidans (strain ATCC 23270 / DSM 14882 / CIP 104768 / NCIMB 8455) (Ferrobacillus ferrooxidans (strain ATCC 23270)).